A 467-amino-acid polypeptide reads, in one-letter code: Uronate isomerase (467 aa).

It belongs to the metallo-dependent hydrolases superfamily. Uronate isomerase family.

It carries out the reaction D-glucuronate = D-fructuronate. The enzyme catalyses aldehydo-D-galacturonate = keto-D-tagaturonate. Its pathway is carbohydrate metabolism; pentose and glucuronate interconversion. The sequence is that of Uronate isomerase from Clostridium acetobutylicum (strain ATCC 824 / DSM 792 / JCM 1419 / IAM 19013 / LMG 5710 / NBRC 13948 / NRRL B-527 / VKM B-1787 / 2291 / W).